The primary structure comprises 3051 residues: Biorientation of chromosomes in cell division protein 1-like 1 (3051 aa).

The span at 1–33 shows a compositional bias: pro residues; the sequence is MATNPQPQPPPPAPPPPPPQPQPQPPPPPPGPG. Disordered stretches follow at residues 1-47, 164-197, 215-288, 301-393, and 411-469; these read MATN…AGAG, HKEE…SANV, ASAA…CPVE, ILLN…KEDF, and VHTS…VRHA. Residues 34–47 are compositionally biased toward gly residues; the sequence is AGPGAGGAGGAGAG. The span at 215–227 shows a compositional bias: low complexity; sequence ASAARASTETSNA. Over residues 246 to 263 the composition is skewed to basic and acidic residues; that stretch reads STDKERTSEDMADKEKST. Ser-266 carries the post-translational modification Phosphoserine. Residues 312–393 are compositionally biased toward basic and acidic residues; it reads SEQKNKSTDK…KTVEGTKEDF (82 aa). A compositionally biased stretch (acidic residues) spans 418 to 443; it reads SFEEDTEEEVVTSDSMEEGEITSDDE. Position 473 is an N6-acetyllysine (Lys-473). Phosphoserine is present on residues Ser-482 and Ser-484. Basic and acidic residues-rich tracts occupy residues 497–527, 549–570, and 580–653; these read IAKE…EKTK, LEPK…EKKV, and SRNV…LERE. The interval 497-1203 is disordered; it reads IAKEKEERLL…EKHADHRSTL (707 aa). Ser-635 and Ser-659 each carry phosphoserine. Phosphothreonine occurs at positions 660 and 733. Composition is skewed to basic and acidic residues over residues 671 to 772, 804 to 852, 866 to 878, 940 to 966, 984 to 1021, and 1028 to 1075; these read TDTR…EENI, KDGK…KIQK, RRSE…KCDM, KPDK…KPFE, TQKD…DGHK, and SSKD…ENRR. Ser-1077 carries the phosphoserine modification. 2 stretches are compositionally biased toward polar residues: residues 1092–1103 and 1135–1148; these read NTLSTPSGSSLQ and SKTQ…SQQD. Ser-1145 and Ser-1318 each carry phosphoserine. Thr-1354 is modified (phosphothreonine). Disordered stretches follow at residues 1456–1550, 1700–1725, and 1760–1890; these read KLKH…QSEV, GSIS…ETEG, and VVLG…TGLG. Positions 1465–1479 are enriched in basic and acidic residues; the sequence is KVKDISIDVERRNEN. Residues 1482-1504 are compositionally biased toward polar residues; that stretch reads VDTSAGSGSAPSVLHQRNGQTED. 3 positions are modified to phosphoserine: Ser-1531, Ser-1701, and Ser-1710. Residues Ser-2013, Ser-2025, Ser-2128, and Ser-2203 each carry the phosphoserine modification. Disordered stretches follow at residues 2189–2210, 2258–2285, 2403–2447, 2472–2519, 2615–2635, and 2717–3051; these read DFEG…STSK, TSSV…TPAE, STEE…FAGR, EDKS…AKDP, DQAS…FPEE, and VENS…KAKR. Residues 2191–2207 show a composition bias toward low complexity; sequence EGPMPSAPPEAESPLAS. Basic and acidic residues predominate over residues 2428 to 2439; sequence AEKEEKHGKECP. At Ser-2475 the chain carries Phosphoserine. A compositionally biased stretch (low complexity) spans 2483–2492; that stretch reads GSSTASYSAG. A phosphoserine mark is found at Ser-2501 and Ser-2618. 3 stretches are compositionally biased toward basic and acidic residues: residues 2621–2633, 2724–2746, and 2754–2767; these read KTGD…KSFP, TNEE…KDNA, and VEAD…EERH. A compositionally biased stretch (acidic residues) spans 2780 to 2789; sequence SEDEPDDNPD. The segment covering 2791-2822 has biased composition (basic and acidic residues); it reads LDSRIETAQRQCPETEPHDTKEENSRDLEELP. A compositionally biased stretch (polar residues) spans 2823–2834; that stretch reads KTSSETNSTTSR. The segment covering 2848 to 2864 has biased composition (basic and acidic residues); sequence TGEKPEQNDDDTIKSQE. Residues 2871–2880 show a composition bias toward basic residues; sequence IKRKRGRPRK. The a.T hook DNA-binding region spans 2872-2884; that stretch reads KRKRGRPRKYPVE. Polar residues predominate over residues 2896-2910; that stretch reads DTGIVTVEQSPSSSK. Residues Ser-2905 and Ser-2907 each carry the phosphoserine modification. A compositionally biased stretch (basic residues) spans 2944–2953; that stretch reads VRRRGRKPKR. Position 2954 is a phosphoserine (Ser-2954). Thr-2956 bears the Phosphothreonine mark. Ser-2958, Ser-2964, and Ser-2973 each carry phosphoserine. Glycyl lysine isopeptide (Lys-Gly) (interchain with G-Cter in ubiquitin) cross-links involve residues Lys-2981 and Lys-2982. Residues 2985 to 2998 are compositionally biased toward acidic residues; the sequence is ESDEEEEEEEEDEP. 2 positions are modified to phosphoserine: Ser-2986 and Ser-3019. The span at 3000–3020 shows a compositional bias: polar residues; it reads GATTRSTTRSEAQRSKTQLSP. Positions 3039 to 3051 are enriched in basic and acidic residues; it reads QRVEEAPVKKAKR.

It belongs to the BOD1 family. Interacts (via COMPASS-Shg1 domain) with SETD1A at stalled replication forks; this interaction mediates FANCD2-dependent nucleosome remodeling at reversed forks protecting them from nucleolytic degradation.

The protein localises to the chromosome. Its function is as follows. Component of the fork protection machinery required to protect stalled/damaged replication forks from uncontrolled DNA2-dependent resection. Acts by stabilizing RAD51 at stalled replication forks and protecting RAD51 nucleofilaments from the antirecombinogenic activities of FBH1 and BLM. Does not regulate spindle orientation. The chain is Biorientation of chromosomes in cell division protein 1-like 1 from Homo sapiens (Human).